A 161-amino-acid chain; its full sequence is Nucleotide-binding protein Shew185_3601 (161 aa).

It belongs to the YajQ family.

Nucleotide-binding protein. This chain is Nucleotide-binding protein Shew185_3601, found in Shewanella baltica (strain OS185).